We begin with the raw amino-acid sequence, 288 residues long: ATP synthase gamma chain (288 aa).

This sequence belongs to the ATPase gamma chain family. F-type ATPases have 2 components, CF(1) - the catalytic core - and CF(0) - the membrane proton channel. CF(1) has five subunits: alpha(3), beta(3), gamma(1), delta(1), epsilon(1). CF(0) has three main subunits: a, b and c.

The protein localises to the cell inner membrane. In terms of biological role, produces ATP from ADP in the presence of a proton gradient across the membrane. The gamma chain is believed to be important in regulating ATPase activity and the flow of protons through the CF(0) complex. This chain is ATP synthase gamma chain, found in Paracidovorax citrulli (strain AAC00-1) (Acidovorax citrulli).